The primary structure comprises 211 residues: MADS-box protein AGL72 (211 aa).

The MADS-box domain occupies 1 to 61 (MVRGKIEIKK…GRLYEFASSD (61 aa)). One can recognise a K-box domain in the interval 88–187 (VQGLKKEMVT…LCQVGERPMG (100 aa)).

The protein resides in the nucleus. MADS-box transcription factor that acts with AGL42 and AGL71 in the control of flowering time. Promotes flowering at the shoot apical and axillary meristems. Seems to act through a gibberellin-dependent pathway. Interacts genetically with SOC1 and its expression is directly regulated by SOC1. This Arabidopsis thaliana (Mouse-ear cress) protein is MADS-box protein AGL72 (AGL72).